We begin with the raw amino-acid sequence, 313 residues long: Probable 5-dehydro-4-deoxyglucarate dehydratase (313 aa).

It belongs to the DapA family.

It catalyses the reaction 5-dehydro-4-deoxy-D-glucarate + H(+) = 2,5-dioxopentanoate + CO2 + H2O. It functions in the pathway carbohydrate acid metabolism; D-glucarate degradation; 2,5-dioxopentanoate from D-glucarate: step 2/2. The protein is Probable 5-dehydro-4-deoxyglucarate dehydratase of Bradyrhizobium sp. (strain BTAi1 / ATCC BAA-1182).